Reading from the N-terminus, the 283-residue chain is DNA repair protein RecO (283 aa).

Over residues 254–264 (SSPASVGSSAT) the composition is skewed to polar residues. A disordered region spans residues 254-283 (SSPASVGSSATRYFAQGDTDENDRDPPGAR).

The protein belongs to the RecO family.

Involved in DNA repair and RecF pathway recombination. In Roseiflexus sp. (strain RS-1), this protein is DNA repair protein RecO.